The chain runs to 206 residues: Large ribosomal subunit protein uL4 (206 aa).

Residues 47–75 (GTQSAKTRAEVSGGGIKPWRQKGTGRARQ) are disordered.

Belongs to the universal ribosomal protein uL4 family. Part of the 50S ribosomal subunit.

One of the primary rRNA binding proteins, this protein initially binds near the 5'-end of the 23S rRNA. It is important during the early stages of 50S assembly. It makes multiple contacts with different domains of the 23S rRNA in the assembled 50S subunit and ribosome. Functionally, forms part of the polypeptide exit tunnel. This chain is Large ribosomal subunit protein uL4, found in Clostridium botulinum (strain 657 / Type Ba4).